The primary structure comprises 167 residues: Protein-export protein SecB (167 aa).

Belongs to the SecB family. As to quaternary structure, homotetramer, a dimer of dimers. One homotetramer interacts with 1 SecA dimer.

The protein resides in the cytoplasm. Its function is as follows. One of the proteins required for the normal export of preproteins out of the cell cytoplasm. It is a molecular chaperone that binds to a subset of precursor proteins, maintaining them in a translocation-competent state. It also specifically binds to its receptor SecA. The protein is Protein-export protein SecB of Wolbachia sp. subsp. Brugia malayi (strain TRS).